Consider the following 150-residue polypeptide: Actin-related protein 2/3 complex subunit 5-C (150 aa).

The tract at residues 21 to 45 is disordered; sequence NKFVDEEEAGEGQQGPDEGEVDSAI.

This sequence belongs to the ARPC5 family. As to quaternary structure, component of the Arp2/3 complex composed of actr2/arp2, actr3/arp3, arpc1 (arpc1a or arpc1b), arpc2, arpc3, arpc4 and arpc5.

It localises to the cytoplasm. The protein localises to the cytoskeleton. It is found in the cell projection. The protein resides in the nucleus. Its function is as follows. Component of the Arp2/3 complex, a multiprotein complex that mediates actin polymerization upon stimulation by nucleation-promoting factor (NPF). The Arp2/3 complex mediates the formation of branched actin networks in the cytoplasm, providing the force for cell motility. In addition to its role in the cytoplasmic cytoskeleton, the Arp2/3 complex also promotes actin polymerization in the nucleus, thereby regulating gene transcription and repair of damaged DNA. The Arp2/3 complex promotes homologous recombination (HR) repair in response to DNA damage by promoting nuclear actin polymerization, leading to drive motility of double-strand breaks (DSBs). This Xenopus laevis (African clawed frog) protein is Actin-related protein 2/3 complex subunit 5-C (arpc5-c).